The chain runs to 189 residues: Isopentenyl-diphosphate Delta-isomerase 2 (189 aa).

Residues H24 and H30 each contribute to the Mn(2+) site. Residues 28-160 enclose the Nudix hydrolase domain; it reads ALHRAISIFV…PETYSFWLAA (133 aa). The active site involves C65. C65 lines the Mg(2+) pocket. H67 serves as a coordination point for Mn(2+). A Mg(2+)-binding site is contributed by E85. Positions 110 and 112 each coordinate Mn(2+). The active site involves E112.

The protein belongs to the IPP isomerase type 1 family. Mg(2+) is required as a cofactor. It depends on Mn(2+) as a cofactor.

It localises to the cytoplasm. The catalysed reaction is isopentenyl diphosphate = dimethylallyl diphosphate. Its pathway is isoprenoid biosynthesis; dimethylallyl diphosphate biosynthesis; dimethylallyl diphosphate from isopentenyl diphosphate: step 1/1. Functionally, catalyzes the 1,3-allylic rearrangement of the homoallylic substrate isopentenyl (IPP) to its highly electrophilic allylic isomer, dimethylallyl diphosphate (DMAPP). The sequence is that of Isopentenyl-diphosphate Delta-isomerase 2 from Aromatoleum aromaticum (strain DSM 19018 / LMG 30748 / EbN1) (Azoarcus sp. (strain EbN1)).